We begin with the raw amino-acid sequence, 734 residues long: Putative K(+)-stimulated pyrophosphate-energized sodium pump (734 aa).

The next 5 helical transmembrane spans lie at 3–23 (SILF…AYYF), 58–78 (IVGC…YGFH), 82–102 (VWVP…GFLG), 134–154 (VMGL…YLLL), and 169–189 (LCVI…QALF). Lysine 199 provides a ligand contact to substrate. Mg(2+)-binding residues include aspartate 202, aspartate 206, asparagine 229, and aspartate 232. The next 7 membrane-spanning stretches (helical) occupy residues 244-264 (LYES…AAFI), 275-295 (AVIA…IGIF), 314-334 (FGTN…LWLL), 336-356 (LDNW…GIVI), 377-397 (SGKT…MLST), 398-418 (AIPV…ASGF), and 423-443 (VGMG…TLGI). Aspartate 455 lines the Mg(2+) pocket. 4 consecutive transmembrane segments (helical) span residues 491-511 (FAIG…IEEI), 557-577 (GMFL…NAVG), 629-649 (ILAP…GLLI), and 650-670 (GGLS…GAWD). The Ca(2+) site is built by aspartate 670, aspartate 696, and aspartate 700. Position 703 (lysine 703) interacts with substrate. Residues 712–732 (ILIKLMSMVAIVMAGLTVAWS) form a helical membrane-spanning segment.

Belongs to the H(+)-translocating pyrophosphatase (TC 3.A.10) family. K(+)-stimulated subfamily. In terms of assembly, homodimer. Requires Mg(2+) as cofactor.

The protein resides in the cell inner membrane. It catalyses the reaction Na(+)(in) + diphosphate + H2O = Na(+)(out) + 2 phosphate + H(+). With respect to regulation, requires K(+) for maximal activity. In terms of biological role, sodium pump that utilizes the energy of pyrophosphate hydrolysis as the driving force for Na(+) movement across the membrane. In Bacteroides thetaiotaomicron (strain ATCC 29148 / DSM 2079 / JCM 5827 / CCUG 10774 / NCTC 10582 / VPI-5482 / E50), this protein is Putative K(+)-stimulated pyrophosphate-energized sodium pump.